Consider the following 638-residue polypeptide: Pheromone-processing carboxypeptidase KEX1 (638 aa).

A signal peptide spans 1–32; that stretch reads MSSCQPPPFLSSMVVRWLSVWIILASSAFASA. The Lumenal segment spans residues 33 to 519; sequence KCAADYYVRS…KAATWKAYYK (487 aa). Residue Ser184 is part of the active site. Residues Asn203, Asn246, and Asn291 are each glycosylated (N-linked (GlcNAc...) asparagine). Asp386 is a catalytic residue. 2 N-linked (GlcNAc...) asparagine glycosylation sites follow: Asn437 and Asn445. His448 is an active-site residue. N-linked (GlcNAc...) asparagine glycosylation occurs at Asn497. The helical transmembrane segment at 520–540 threads the bilayer; it reads SGEVALVVVVIAAGAWGFFLW. Residues 541–638 lie on the Cytoplasmic side of the membrane; sequence RSRRQRQGSG…QDGTPSASRT (98 aa). Residues 586–638 are disordered; it reads ASELETLHDMDDRSPGPSRDNYSVGEDSETEDEKRYPPTDFDRQDGTPSASRT. Composition is skewed to basic and acidic residues over residues 590–599 and 617–630; these read ETLHDMDDRS and DEKR…DRQD.

Belongs to the peptidase S10 family.

The protein resides in the golgi apparatus. It is found in the trans-Golgi network membrane. The enzyme catalyses Preferential release of a C-terminal arginine or lysine residue.. Protease with a carboxypeptidase B-like function involved in the C-terminal processing of the lysine and arginine residues from protein precursors. Promotes cell fusion and is involved in the programmed cell death. This Uncinocarpus reesii (strain UAMH 1704) protein is Pheromone-processing carboxypeptidase KEX1 (KEX1).